Here is a 129-residue protein sequence, read N- to C-terminus: MARDRRPAKKKVSKNIAAGVAHVNSSFNNTKILISDVQGNAIAWSSAGTMGFKGSRKSTPFAAQMAAEDAGKKAQDHGVRTLEVEVQGPGSGRESALRALAALGFQISSIRDVTPMAHNGCRPPKRRRV.

It belongs to the universal ribosomal protein uS11 family. In terms of assembly, part of the 30S ribosomal subunit. Interacts with proteins S7 and S18. Binds to IF-3.

Functionally, located on the platform of the 30S subunit, it bridges several disparate RNA helices of the 16S rRNA. Forms part of the Shine-Dalgarno cleft in the 70S ribosome. This is Small ribosomal subunit protein uS11 from Jannaschia sp. (strain CCS1).